The following is a 341-amino-acid chain: GTPase Obg (341 aa).

Residues 1-159 (MKFVDEALIK…RNLRLELRVL (159 aa)) enclose the Obg domain. A disordered region spans residues 128–150 (TRYKSSVNRSPRQTTPGSPGESR). Residues 129–144 (RYKSSVNRSPRQTTPG) show a composition bias toward polar residues. Positions 160 to 334 (ADVGLLGLPN…LCYALMQLID (175 aa)) constitute an OBG-type G domain. GTP is bound by residues 166–173 (GLPNAGKS), 191–195 (FTTLH), 213–216 (DIPG), 283–286 (NKID), and 315–317 (SAI). The Mg(2+) site is built by S173 and T193.

The protein belongs to the TRAFAC class OBG-HflX-like GTPase superfamily. OBG GTPase family. Monomer. The cofactor is Mg(2+).

The protein resides in the cytoplasm. Functionally, an essential GTPase which binds GTP, GDP and possibly (p)ppGpp with moderate affinity, with high nucleotide exchange rates and a fairly low GTP hydrolysis rate. Plays a role in control of the cell cycle, stress response, ribosome biogenesis and in those bacteria that undergo differentiation, in morphogenesis control. In Legionella pneumophila (strain Lens), this protein is GTPase Obg.